The primary structure comprises 190 residues: MRIAILGGTYNPVHIGHMFLAKELEHFLNVDKILFIPTHKPVHKRVENISVKDRIAMLKLAVQHEKNMFIDECDIVNGGITYTVDTIACIKNKYVHDDIYLVIGDDLFESFDSWKNPEKIVESVNLVVVHRIYSERLISRFKHTYIDNRIFPISSSEIRHRIEQGLPVDYLLPFDVLRYIKNNNLYVKGK.

It belongs to the NadD family.

It catalyses the reaction nicotinate beta-D-ribonucleotide + ATP + H(+) = deamido-NAD(+) + diphosphate. It functions in the pathway cofactor biosynthesis; NAD(+) biosynthesis; deamido-NAD(+) from nicotinate D-ribonucleotide: step 1/1. In terms of biological role, catalyzes the reversible adenylation of nicotinate mononucleotide (NaMN) to nicotinic acid adenine dinucleotide (NaAD). The chain is Probable nicotinate-nucleotide adenylyltransferase from Borrelia hermsii (strain HS1 / DAH).